Consider the following 147-residue polypeptide: D-aminoacyl-tRNA deacylase (147 aa).

Positions G137–P138 match the Gly-cisPro motif, important for rejection of L-amino acids motif.

It belongs to the DTD family. As to quaternary structure, homodimer.

The protein localises to the cytoplasm. It carries out the reaction glycyl-tRNA(Ala) + H2O = tRNA(Ala) + glycine + H(+). It catalyses the reaction a D-aminoacyl-tRNA + H2O = a tRNA + a D-alpha-amino acid + H(+). Functionally, an aminoacyl-tRNA editing enzyme that deacylates mischarged D-aminoacyl-tRNAs. Also deacylates mischarged glycyl-tRNA(Ala), protecting cells against glycine mischarging by AlaRS. Acts via tRNA-based rather than protein-based catalysis; rejects L-amino acids rather than detecting D-amino acids in the active site. By recycling D-aminoacyl-tRNA to D-amino acids and free tRNA molecules, this enzyme counteracts the toxicity associated with the formation of D-aminoacyl-tRNA entities in vivo and helps enforce protein L-homochirality. This Bacillus licheniformis (strain ATCC 14580 / DSM 13 / JCM 2505 / CCUG 7422 / NBRC 12200 / NCIMB 9375 / NCTC 10341 / NRRL NRS-1264 / Gibson 46) protein is D-aminoacyl-tRNA deacylase.